The chain runs to 245 residues: tRNA (guanine-N(1)-)-methyltransferase (245 aa).

S-adenosyl-L-methionine-binding positions include G113 and 133–138; that span reads IGDYVL.

It belongs to the RNA methyltransferase TrmD family. In terms of assembly, homodimer.

The protein resides in the cytoplasm. The catalysed reaction is guanosine(37) in tRNA + S-adenosyl-L-methionine = N(1)-methylguanosine(37) in tRNA + S-adenosyl-L-homocysteine + H(+). Functionally, specifically methylates guanosine-37 in various tRNAs. This is tRNA (guanine-N(1)-)-methyltransferase from Actinobacillus succinogenes (strain ATCC 55618 / DSM 22257 / CCUG 43843 / 130Z).